The sequence spans 187 residues: Large ribosomal subunit protein uL22 (187 aa).

Belongs to the universal ribosomal protein uL22 family.

The sequence is that of Large ribosomal subunit protein uL22 (RPL17) from Theileria parva (East coast fever infection agent).